We begin with the raw amino-acid sequence, 223 residues long: Exosome complex component RRP46 (223 aa).

It belongs to the RNase PH family. In terms of assembly, component of the RNA exosome complex. Specifically part of the catalytically inactive RNA exosome core complex (Exo-9) which may associate with the catalytic subunits RRP6 and DIS3 in cytoplasmic- and nuclear-specific RNA exosome complex forms. Exo-9 is formed by a hexameric base ring of RNase PH domain-containing subunits and a cap ring consisting of CSL4, RRP4 and RRP40.

It localises to the cytoplasm. The protein localises to the nucleus. Its subcellular location is the nucleolus. Its function is as follows. Non-catalytic component of the RNA exosome complex which has 3'-&gt;5' exoribonuclease activity and participates in a multitude of cellular RNA processing and degradation events. In the nucleus, the RNA exosome complex is involved in proper maturation of stable RNA species such as rRNA, snRNA and snoRNA, in the elimination of RNA processing by-products and non-coding 'pervasive' transcripts, such as antisense RNA species and cryptic unstable transcripts (CUTs), and of mRNAs with processing defects, thereby limiting or excluding their export to the cytoplasm. In the cytoplasm, the RNA exosome complex is involved in general mRNA turnover and in RNA surveillance pathways, preventing translation of aberrant mRNAs. The catalytic inactive RNA exosome core complex of 9 subunits (Exo-9) is proposed to play a pivotal role in the binding and presentation of RNA for ribonucleolysis, and to serve as a scaffold for the association with catalytic subunits and accessory proteins or complexes. RRP46 is part of the hexameric ring of RNase PH domain-containing subunits proposed to form a central channel which threads RNA substrates for degradation. This Saccharomyces cerevisiae (strain ATCC 204508 / S288c) (Baker's yeast) protein is Exosome complex component RRP46 (RRP46).